We begin with the raw amino-acid sequence, 54 residues long: ATP synthase protein 8 (54 aa).

Residues 9-25 (WVFLFFLVWLVLGFLGL) traverse the membrane as a helical segment.

This sequence belongs to the ATPase protein 8 family. F-type ATPases have 2 components, CF(1) - the catalytic core - and CF(0) - the membrane proton channel.

It is found in the mitochondrion membrane. Functionally, mitochondrial membrane ATP synthase (F(1)F(0) ATP synthase or Complex V) produces ATP from ADP in the presence of a proton gradient across the membrane which is generated by electron transport complexes of the respiratory chain. F-type ATPases consist of two structural domains, F(1) - containing the extramembraneous catalytic core and F(0) - containing the membrane proton channel, linked together by a central stalk and a peripheral stalk. During catalysis, ATP synthesis in the catalytic domain of F(1) is coupled via a rotary mechanism of the central stalk subunits to proton translocation. Part of the complex F(0) domain. Minor subunit located with subunit a in the membrane. The polypeptide is ATP synthase protein 8 (MTATP8) (Branchiostoma floridae (Florida lancelet)).